The chain runs to 130 residues: Blasticidin-S deaminase (130 aa).

One can recognise a CMP/dCMP-type deaminase domain in the interval 1 to 129; it reads MPLSQEESTL…ELLPSGYVWE (129 aa). Ser28 provides a ligand contact to substrate. Residue Cys54 participates in Zn(2+) binding. The Proton donor role is filled by Glu56. Arg82 serves as a coordination point for substrate. Zn(2+) contacts are provided by Cys88 and Cys91. The substrate site is built by Tyr126 and Trp128.

Belongs to the cytidine and deoxycytidylate deaminase family. Homotetramer. It depends on Zn(2+) as a cofactor.

It carries out the reaction blasticidin S + H2O + H(+) = deaminohydroxyblasticidin S + NH4(+). In terms of biological role, catalyzes the deamination of the cytosine moiety of the antibiotics blasticidin S, cytomycin and acetylblasticidin S. The chain is Blasticidin-S deaminase (bsd) from Aspergillus terreus.